The sequence spans 630 residues: GATA-type transcription factor SRE1 (630 aa).

Disordered regions lie at residues 1-139 (MTGL…TPLW) and 162-203 (DRPT…RLTD). Composition is skewed to polar residues over residues 66-82 (DNTQGDGSRNMDSQLQN), 115-133 (KAQSKEQAFTGHSCSNCGT), and 175-196 (YGSSSAQTLDKSRSSTSPTNDG). Residues 128–152 (CSNCGTKRTPLWRRSPTGATICNAC) form a GATA-type 1 zinc finger. The cystein-rich region (CRR) stretch occupies residues 219 to 237 (CPGGGSCNGTGGAEGCDGC). A disordered region spans residues 256–283 (HTPRTSPQVSTQGGPGSTEGDAGSSNPE). Residues 258–267 (PRTSPQVSTQ) are compositionally biased toward polar residues. The GATA-type 2 zinc finger occupies 291-315 (CQNCQTTVTPLWRRDENGHPICNAC). Residues 339 to 609 (KRVVPAMREQ…AKAERRARLQ (271 aa)) are disordered. The segment covering 349 to 363 (SPPSATQSSNGSVSP) has biased composition (polar residues). 2 stretches are compositionally biased toward low complexity: residues 436 to 447 (NNHNNGETTNTH) and 492 to 503 (SSSSASFPNNNP). The segment covering 504–513 (GRFNSISSLL) has biased composition (polar residues). The span at 558-568 (SHSPPRFSPSL) shows a compositional bias: low complexity. Basic and acidic residues predominate over residues 595 to 609 (VDHRDAKAERRARLQ). A coiled-coil region spans residues 595-630 (VDHRDAKAERRARLQREAQDMREALKAKERELALLE).

It is found in the nucleus. Functionally, GATA-type transcription repressor that regulates iron- acquisition genes through specific binding the GATA sequence element 5'-(G/A)ATC(T/A)GATAA-3' of target promoters in an iron- and zinc-dependent manner. Regulation occurs via direct binding of iron ions. Iron acquisition regulation is critical for survival under both iron-limiting conditions (to acquire essential iron) and iron-replete conditions (to limit iron toxicity). SRE1 targets include genes encoding a number of key iron-regulated factors such as those involved in siderophore biosynthesis, presumed ferric reductase activity, iron-responsive transcriptional regulation, oxidative stress response, as well as genes encoding a number of putative oxidoreductases, metabolic and mitochondrial enzymes, superoxide dismutase, and genes previously identified as induced during nitrosative stress. The polypeptide is GATA-type transcription factor SRE1 (Ajellomyces capsulatus (Darling's disease fungus)).